The following is an 88-amino-acid chain: RNA-binding protein Hfq (88 aa).

The Sm domain maps to 9 to 68; it reads DPFLNALRRERIPVSIYLVNGIKLQGQIESFDQFVILLKNTVNQMVYKHAISTVVPARAV. The tract at residues 66 to 88 is disordered; the sequence is RAVSHHSGEQQRAPSDRPEKTED. A compositionally biased stretch (basic and acidic residues) spans 71-88; the sequence is HSGEQQRAPSDRPEKTED.

The protein belongs to the Hfq family. Homohexamer.

Functionally, RNA chaperone that binds small regulatory RNA (sRNAs) and mRNAs to facilitate mRNA translational regulation in response to envelope stress, environmental stress and changes in metabolite concentrations. Also binds with high specificity to tRNAs. This is RNA-binding protein Hfq from Vibrio atlanticus (strain LGP32) (Vibrio splendidus (strain Mel32)).